Here is a 376-residue protein sequence, read N- to C-terminus: Thiol-disulfide oxidoreductase LTO1 (376 aa).

The N-terminal 45 residues, 1 to 45 (MMARFVSVSSCQFHFGFREVSPPSVTSYPRRFEVSDRRFPAIPIK), are a transit peptide targeting the chloroplast. A disordered region spans residues 44–77 (IKCSSSEPENGEDSAPSLSSSSSSSTSEVSTSNS). The Stromal segment spans residues 46–81 (CSSSEPENGEDSAPSLSSSSSSSTSEVSTSNSSTYN). The span at 57 to 77 (SAPSLSSSSSSSTSEVSTSNS) shows a compositional bias: low complexity. Residues 82 to 102 (WYTGIGGIGMLDTAYLTYLKV) traverse the membrane as a helical segment. The Lumenal segment spans residues 103–125 (TGSDAFCPIGGGTCGDVLNSDYA). Cysteine 109 and cysteine 116 are oxidised to a cystine. Residues 126-146 (VVFGVPLPVIGFVMYGVVTAL) traverse the membrane as a helical segment. The Stromal portion of the chain corresponds to 147 to 165 (SAELGEGNLPFGISKSNGR). Residues 166-186 (FALFGITTAMASASAYFLYIL) form a helical membrane-spanning segment. Residues 187-192 (STKLSG) are Lumenal-facing. Residues 193–213 (SSCLYCLVSAFLSFSLFFLSV) form a helical membrane-spanning segment. A disulfide bridge connects residues cysteine 195 and cysteine 198. At 214-223 (KDVKLQEIQQ) the chain is on the stromal side. The chain crosses the membrane as a helical span at residues 224–244 (VVGLQICLAIIVVASLTASYS). Topologically, residues 245–376 (TAQPIPSRSG…DQANETNQLQ (132 aa)) are lumenal. 2 disulfides stabilise this stretch: cysteine 293–cysteine 296 and cysteine 316–cysteine 331.

It belongs to the VKOR family. Interacts with the PSII subunits PSBO1 and PSBO2. Interacts with TL17, TL20.3, HCF164, PETJ, VDE1, EDA3, FKBP13 and FKBP20-2. As to expression, expressed in cotyledons, rosette leaves, stems, cauline leaves and flowers.

It localises to the plastid. The protein localises to the chloroplast thylakoid membrane. Thiol-disulfide oxidoreductase catalyzing disulfide bond formation of chloroplast proteins and involved in redox regulation and photosynthetic electron transport. Required for the assembly of photosystem II (PSII) through the formation of disulfide bond in PSBO, a subunit of the PSII oxygen-evolving complex in the thylakoid lumen. Involved in the formation of disulfide bonds in the lumenal protein FKBP13. In vitro, reduces phylloquinone (vitamin K1) and menaquinone (vitamin K2) to their respective quinol. Cannot reduce phylloquinone epoxide to phylloquinone. Plays an important role in regulating the thylakoid lumen redox. The polypeptide is Thiol-disulfide oxidoreductase LTO1 (Arabidopsis thaliana (Mouse-ear cress)).